Reading from the N-terminus, the 249-residue chain is Ubiquinone/menaquinone biosynthesis C-methyltransferase UbiE (249 aa).

S-adenosyl-L-methionine is bound by residues Thr-72, Asp-93, and 121-122 (DA).

It belongs to the class I-like SAM-binding methyltransferase superfamily. MenG/UbiE family.

It catalyses the reaction a 2-demethylmenaquinol + S-adenosyl-L-methionine = a menaquinol + S-adenosyl-L-homocysteine + H(+). It carries out the reaction a 2-methoxy-6-(all-trans-polyprenyl)benzene-1,4-diol + S-adenosyl-L-methionine = a 5-methoxy-2-methyl-3-(all-trans-polyprenyl)benzene-1,4-diol + S-adenosyl-L-homocysteine + H(+). It participates in quinol/quinone metabolism; menaquinone biosynthesis; menaquinol from 1,4-dihydroxy-2-naphthoate: step 2/2. It functions in the pathway cofactor biosynthesis; ubiquinone biosynthesis. Functionally, methyltransferase required for the conversion of demethylmenaquinol (DMKH2) to menaquinol (MKH2) and the conversion of 2-polyprenyl-6-methoxy-1,4-benzoquinol (DDMQH2) to 2-polyprenyl-3-methyl-6-methoxy-1,4-benzoquinol (DMQH2). The protein is Ubiquinone/menaquinone biosynthesis C-methyltransferase UbiE of Cellvibrio japonicus (strain Ueda107) (Pseudomonas fluorescens subsp. cellulosa).